The chain runs to 469 residues: ATP synthase subunit beta (469 aa).

ATP is bound at residue 157–164 (GGAGVGKT).

It belongs to the ATPase alpha/beta chains family. F-type ATPases have 2 components, CF(1) - the catalytic core - and CF(0) - the membrane proton channel. CF(1) has five subunits: alpha(3), beta(3), gamma(1), delta(1), epsilon(1). CF(0) has three main subunits: a(1), b(2) and c(9-12). The alpha and beta chains form an alternating ring which encloses part of the gamma chain. CF(1) is attached to CF(0) by a central stalk formed by the gamma and epsilon chains, while a peripheral stalk is formed by the delta and b chains.

It localises to the cell membrane. It carries out the reaction ATP + H2O + 4 H(+)(in) = ADP + phosphate + 5 H(+)(out). Functionally, produces ATP from ADP in the presence of a proton gradient across the membrane. The catalytic sites are hosted primarily by the beta subunits. This chain is ATP synthase subunit beta, found in Brevibacillus brevis (strain 47 / JCM 6285 / NBRC 100599).